We begin with the raw amino-acid sequence, 119 residues long: Large ribosomal subunit protein bL20 (119 aa).

This sequence belongs to the bacterial ribosomal protein bL20 family.

Functionally, binds directly to 23S ribosomal RNA and is necessary for the in vitro assembly process of the 50S ribosomal subunit. It is not involved in the protein synthesizing functions of that subunit. In Thermoanaerobacter pseudethanolicus (strain ATCC 33223 / 39E) (Clostridium thermohydrosulfuricum), this protein is Large ribosomal subunit protein bL20.